We begin with the raw amino-acid sequence, 50 residues long: Defensin-like protein 1 (50 aa).

4 disulfides stabilise this stretch: C2-C50, C14-C35, C20-C44, and C24-C46.

It belongs to the DEFL family.

It localises to the secreted. In terms of biological role, possesses antimicrobial activity sensitive to inorganic cations. Binds specifically to the fungal plasma membrane. Has no inhibitory effect on insect gut alpha-amylase. The sequence is that of Defensin-like protein 1 from Aesculus hippocastanum (Horse chestnut).